The chain runs to 415 residues: Methylaspartate ammonia-lyase 2 (415 aa).

Residue Gln-173 participates in (2S,3S)-3-methyl-L-aspartate binding. Asp-238, Glu-273, and Asp-307 together coordinate Mg(2+). Gln-329 serves as a coordination point for (2S,3S)-3-methyl-L-aspartate. The active-site Proton acceptor is the Lys-331. Thr-360–Cys-361 serves as a coordination point for (2S,3S)-3-methyl-L-aspartate.

Belongs to the methylaspartate ammonia-lyase family. In terms of assembly, homodimer. Mg(2+) is required as a cofactor.

It carries out the reaction (2S,3S)-3-methyl-L-aspartate = mesaconate + NH4(+). The protein operates within amino-acid degradation; L-glutamate degradation via mesaconate pathway; acetate and pyruvate from L-glutamate: step 2/4. Functionally, involved in the methylaspartate cycle. Catalyzes the formation of the alpha,beta-unsaturated bond by the reversible anti elimination of ammonia from L-threo-beta-methylaspartate (L-threo-(2S,3S)-3-methylaspartate) to give mesaconate. The protein is Methylaspartate ammonia-lyase 2 of Carboxydothermus hydrogenoformans (strain ATCC BAA-161 / DSM 6008 / Z-2901).